The sequence spans 177 residues: MSRVAKNPVVIPKGVEVSISAAEIAIKGPLGTLVRPQHPAVTVEQDGEALVCKARDGQVNARAMSGTVRALLNNMVVGVSKGFERKLLLVGVGYRAQAQGDKLNLSLGFSHPVVHQMPAGVKVETPSQTEIVIKGVDKQQVGQVAAEVRAYRAPEPYKGKGVRYSDEVVVLKETKKK.

It belongs to the universal ribosomal protein uL6 family. In terms of assembly, part of the 50S ribosomal subunit.

Its function is as follows. This protein binds to the 23S rRNA, and is important in its secondary structure. It is located near the subunit interface in the base of the L7/L12 stalk, and near the tRNA binding site of the peptidyltransferase center. The protein is Large ribosomal subunit protein uL6 of Azoarcus sp. (strain BH72).